A 256-amino-acid polypeptide reads, in one-letter code: Imidazole glycerol phosphate synthase subunit HisF (256 aa).

Residues aspartate 12 and aspartate 131 contribute to the active site.

The protein belongs to the HisA/HisF family. In terms of assembly, heterodimer of HisH and HisF.

The protein localises to the cytoplasm. The enzyme catalyses 5-[(5-phospho-1-deoxy-D-ribulos-1-ylimino)methylamino]-1-(5-phospho-beta-D-ribosyl)imidazole-4-carboxamide + L-glutamine = D-erythro-1-(imidazol-4-yl)glycerol 3-phosphate + 5-amino-1-(5-phospho-beta-D-ribosyl)imidazole-4-carboxamide + L-glutamate + H(+). The protein operates within amino-acid biosynthesis; L-histidine biosynthesis; L-histidine from 5-phospho-alpha-D-ribose 1-diphosphate: step 5/9. IGPS catalyzes the conversion of PRFAR and glutamine to IGP, AICAR and glutamate. The HisF subunit catalyzes the cyclization activity that produces IGP and AICAR from PRFAR using the ammonia provided by the HisH subunit. This chain is Imidazole glycerol phosphate synthase subunit HisF, found in Pseudomonas entomophila (strain L48).